Here is a 92-residue protein sequence, read N- to C-terminus: Small ribosomal subunit protein uS19 (92 aa).

This sequence belongs to the universal ribosomal protein uS19 family.

Protein S19 forms a complex with S13 that binds strongly to the 16S ribosomal RNA. The chain is Small ribosomal subunit protein uS19 from Corynebacterium jeikeium (strain K411).